A 651-amino-acid polypeptide reads, in one-letter code: Coiled-coil domain-containing protein 81 (651 aa).

The disordered stretch occupies residues 194–314 (LSSRESFGKR…PKTSPAPACQ (121 aa)). Phosphoserine is present on serine 206. Composition is skewed to basic and acidic residues over residues 212-222 (RIEHKETENKP) and 232-250 (GENR…KEEG). The span at 265 to 275 (SISPAKVTSGS) shows a compositional bias: polar residues. Residues serine 273, serine 275, serine 294, and serine 416 each carry the phosphoserine modification. Coiled-coil stretches lie at residues 428-465 (SQSL…EELA) and 539-566 (KRNT…EHLA).

Its subcellular location is the cytoplasm. The protein resides in the cytoskeleton. It is found in the microtubule organizing center. It localises to the centrosome. The sequence is that of Coiled-coil domain-containing protein 81 (Ccdc81) from Rattus norvegicus (Rat).